Here is a 393-residue protein sequence, read N- to C-terminus: Acetylornithine aminotransferase (393 aa).

Residues 105–106 and F138 contribute to the pyridoxal 5'-phosphate site; that span reads GA. N(2)-acetyl-L-ornithine is bound at residue R141. 224 to 227 is a pyridoxal 5'-phosphate binding site; that stretch reads DEVQ. Position 253 is an N6-(pyridoxal phosphate)lysine (K253). S281 lines the N(2)-acetyl-L-ornithine pocket. Residue T282 participates in pyridoxal 5'-phosphate binding.

It belongs to the class-III pyridoxal-phosphate-dependent aminotransferase family. ArgD subfamily. As to quaternary structure, homodimer. The cofactor is pyridoxal 5'-phosphate.

Its subcellular location is the cytoplasm. The catalysed reaction is N(2)-acetyl-L-ornithine + 2-oxoglutarate = N-acetyl-L-glutamate 5-semialdehyde + L-glutamate. It participates in amino-acid biosynthesis; L-arginine biosynthesis; N(2)-acetyl-L-ornithine from L-glutamate: step 4/4. The sequence is that of Acetylornithine aminotransferase from Haemophilus ducreyi (strain 35000HP / ATCC 700724).